The primary structure comprises 293 residues: Acetyl-coenzyme A carboxylase carboxyl transferase subunit beta (293 aa).

The CoA carboxyltransferase N-terminal domain occupies 29–293 (LWSKCPECGL…GCRPMEITSA (265 aa)). Residues Cys-33, Cys-36, Cys-52, and Cys-55 each coordinate Zn(2+). Residues 33–55 (CPECGLVVYVKDLKGNASVCAGC) form a C4-type zinc finger.

It belongs to the AccD/PCCB family. As to quaternary structure, acetyl-CoA carboxylase is a heterohexamer composed of biotin carboxyl carrier protein (AccB), biotin carboxylase (AccC) and two subunits each of ACCase subunit alpha (AccA) and ACCase subunit beta (AccD). The cofactor is Zn(2+).

It is found in the cytoplasm. The enzyme catalyses N(6)-carboxybiotinyl-L-lysyl-[protein] + acetyl-CoA = N(6)-biotinyl-L-lysyl-[protein] + malonyl-CoA. The protein operates within lipid metabolism; malonyl-CoA biosynthesis; malonyl-CoA from acetyl-CoA: step 1/1. Functionally, component of the acetyl coenzyme A carboxylase (ACC) complex. Biotin carboxylase (BC) catalyzes the carboxylation of biotin on its carrier protein (BCCP) and then the CO(2) group is transferred by the transcarboxylase to acetyl-CoA to form malonyl-CoA. In Parasynechococcus marenigrum (strain WH8102), this protein is Acetyl-coenzyme A carboxylase carboxyl transferase subunit beta.